The following is a 305-amino-acid chain: tRNA uridine(34) hydroxylase (305 aa).

A Rhodanese domain is found at 136–230; it reads ADENTVVVDK…YLEEVPREQS (95 aa). Catalysis depends on cysteine 190, which acts as the Cysteine persulfide intermediate.

This sequence belongs to the TrhO family.

The catalysed reaction is uridine(34) in tRNA + AH2 + O2 = 5-hydroxyuridine(34) in tRNA + A + H2O. Catalyzes oxygen-dependent 5-hydroxyuridine (ho5U) modification at position 34 in tRNAs. In Brucella melitensis biotype 1 (strain ATCC 23456 / CCUG 17765 / NCTC 10094 / 16M), this protein is tRNA uridine(34) hydroxylase.